The sequence spans 81 residues: Large ribosomal subunit protein bL31B (81 aa).

It belongs to the bacterial ribosomal protein bL31 family. Type B subfamily. In terms of assembly, part of the 50S ribosomal subunit.

The sequence is that of Large ribosomal subunit protein bL31B (rpmE2) from Lactiplantibacillus plantarum (strain ATCC BAA-793 / NCIMB 8826 / WCFS1) (Lactobacillus plantarum).